The primary structure comprises 520 residues: Ribonuclease Y (520 aa).

Residues 5–25 (ITIISSLLFLIVGLVVGSLIF) form a helical membrane-spanning segment. Positions 76–127 (ELRGRRTETQKAENRLLQREENLDRKDTSLSKREATLERKEESISKRQQQIE) are disordered. One can recognise a KH domain in the interval 210–273 (TVSVVTLPND…EIARIALEKL (64 aa)). An HD domain is found at 336–429 (VLNHSLEVSK…VAAADALSAA (94 aa)).

It belongs to the RNase Y family.

It is found in the cell membrane. Functionally, endoribonuclease that initiates mRNA decay. The protein is Ribonuclease Y of Listeria monocytogenes serotype 1/2a (strain 10403S).